Here is a 550-residue protein sequence, read N- to C-terminus: Cell pattern formation-associated protein STUA (550 aa).

Positions 86–192 (RVTATLWEDE…HNIGALLYHP (107 aa)) constitute an HTH APSES-type domain. Residues 120 to 141 (GTKLLNVAGMTRGRRDGILKSE) constitute a DNA-binding region (H-T-H motif). A compositionally biased stretch (polar residues) spans 246 to 266 (SLANGPQSLASTPQPLTNGSQ). 4 disordered regions span residues 246–277 (SLANGPQSLASTPQPLTNGSQPPMPNGGGMLK), 371–412 (HHQP…VKRR), 447–467 (KRRDDEAETPRPGPNVHDHLN), and 527–550 (APVYDTGARPPSAISAPRRQQSFG). Residues 385 to 395 (RGRDEDDDVHR) are compositionally biased toward basic and acidic residues. Positions 517–546 (TVAASPSYPSAPVYDTGARPPSAISAPRRQ) are nuclear localization domain.

It belongs to the EFG1/PHD1/stuA family.

Its subcellular location is the nucleus. Functionally, transcription factor that regulates asexual reproduction. Binds the StuA-response elements (StRE) with the consensus sequence 5'-(A/T)CGCG(T/A)N(A/C)-3' at the promoters of target genes. Differentially regulates the development of macroconidia, microconidia, and chlamydospores. Acts as a positive regulator for the development of macroconidia and as a negative regulator for the development of chlamydospores. Involved in microconidium formation specifically in infected plants. In Fusarium oxysporum (Fusarium vascular wilt), this protein is Cell pattern formation-associated protein STUA.